Here is a 388-residue protein sequence, read N- to C-terminus: Biotin synthase (388 aa).

One can recognise a Radical SAM core domain in the interval 47 to 277; it reads WFGRRVKLNY…DVEVRIAGGR (231 aa). Residues Cys-65, Cys-69, and Cys-72 each contribute to the [4Fe-4S] cluster site. 4 residues coordinate [2Fe-2S] cluster: Cys-109, Cys-142, Cys-202, and Arg-272. The interval 335–371 is disordered; that stretch reads APAGGCGSEQSAGCGSHEGGGACGSAPAPRTDEARTD.

This sequence belongs to the radical SAM superfamily. Biotin synthase family. Homodimer. [4Fe-4S] cluster is required as a cofactor. The cofactor is [2Fe-2S] cluster.

The catalysed reaction is (4R,5S)-dethiobiotin + (sulfur carrier)-SH + 2 reduced [2Fe-2S]-[ferredoxin] + 2 S-adenosyl-L-methionine = (sulfur carrier)-H + biotin + 2 5'-deoxyadenosine + 2 L-methionine + 2 oxidized [2Fe-2S]-[ferredoxin]. The protein operates within cofactor biosynthesis; biotin biosynthesis; biotin from 7,8-diaminononanoate: step 2/2. Catalyzes the conversion of dethiobiotin (DTB) to biotin by the insertion of a sulfur atom into dethiobiotin via a radical-based mechanism. This chain is Biotin synthase, found in Streptomyces avermitilis (strain ATCC 31267 / DSM 46492 / JCM 5070 / NBRC 14893 / NCIMB 12804 / NRRL 8165 / MA-4680).